Here is a 921-residue protein sequence, read N- to C-terminus: Sodium/calcium exchanger 2 (921 aa).

The first 20 residues, 1-20 (MAPLALMGVVLLLGVPHCLG), serve as a signal peptide directing secretion. The disordered stretch occupies residues 23-42 (TPTPSLPPPTANDSDASPEG). A helical membrane pass occupies residues 69-89 (VARAVVYFVAMVYMFLGVSII). 2 N-linked (GlcNAc...) asparagine glycosylation sites follow: N125 and N130. The next 4 membrane-spanning stretches (helical) occupy residues 131-151 (LTLMALGSSAPEILLTVIEVC), 165-185 (IVGSAAFNMFVVIAVCVYVIP), 197-217 (VFFVTASWSIFAYVWLYLILA), and 226-246 (VWEALLTLIFFPVCVVFAWMA). The putative calmodulin-binding region stretch occupies residues 248 to 267 (KRLLFYKYVYKRYRTDPRSG). Residues 371-391 (HAADAARRPGATDGAPDDEDD) form a disordered region. Calx-beta domains follow at residues 389–482 (EDDG…FVRL) and 512–611 (ATVT…FIEL). The Ca(2+) site is built by E407, D443, D468, D469, I471, E473, E476, D518, D519, D520, E536, D598, E599, and E600. The residue at position 622 (S622) is a Phosphoserine. Position 665 (E665) interacts with Ca(2+). Helical transmembrane passes span 721–741 (CFDYVMHFLTVFWKVLFACVP), 749–769 (WACFGVCILVIGVLTALIGDL), 786–806 (VVFVALGTSIPDTFASKVAAL), 823–843 (AVNVFLGLGVAWSVAAVYWAV), 855–875 (LAFSVTLFTVFAFVCIAVLLY), and 893–913 (LATTALFLGLWFLYILFSSLE).

This sequence belongs to the Ca(2+):cation antiporter (CaCA) (TC 2.A.19) family. SLC8 subfamily. In terms of tissue distribution, detected in kidney cortex, in distal convoluted tubules and connecting segments. Detected in brain and spinal cord (at protein level). Detected in brain, especially in hippocampus CA1, CA2 and CA3 fiels, dentate gyrus, cerebellum and brain cortex.

The protein resides in the cell membrane. Its subcellular location is the basolateral cell membrane. The catalysed reaction is Ca(2+)(in) + 3 Na(+)(out) = Ca(2+)(out) + 3 Na(+)(in). Its activity is regulated as follows. Calcium transport is down-regulated by Na(+) and stimulated by Ca(2+). Its function is as follows. Mediates the electrogenic exchange of Ca(2+) against Na(+) ions across the cell membrane, and thereby contributes to the regulation of cytoplasmic Ca(2+) levels and Ca(2+)-dependent cellular processes. Contributes to cellular Ca(2+) homeostasis in excitable cells. Contributes to the rapid decrease of cytoplasmic Ca(2+) levels back to baseline after neuronal activation, and thereby contributes to modulate synaptic plasticity, learning and memory. Plays a role in regulating urinary Ca(2+) and Na(+) excretion. This chain is Sodium/calcium exchanger 2, found in Mus musculus (Mouse).